The primary structure comprises 173 residues: Large ribosomal subunit protein uL10 (173 aa).

This sequence belongs to the universal ribosomal protein uL10 family. As to quaternary structure, part of the ribosomal stalk of the 50S ribosomal subunit. The N-terminus interacts with L11 and the large rRNA to form the base of the stalk. The C-terminus forms an elongated spine to which L12 dimers bind in a sequential fashion forming a multimeric L10(L12)X complex.

In terms of biological role, forms part of the ribosomal stalk, playing a central role in the interaction of the ribosome with GTP-bound translation factors. The sequence is that of Large ribosomal subunit protein uL10 from Oleidesulfovibrio alaskensis (strain ATCC BAA-1058 / DSM 17464 / G20) (Desulfovibrio alaskensis).